The sequence spans 275 residues: Penicillin-insensitive murein endopeptidase (275 aa).

A signal peptide spans 1–19 (MKNWIVGMVALVTMVPVMA). Disulfide bonds link Cys-44-Cys-264, Cys-187-Cys-235, and Cys-216-Cys-223. 5 residues coordinate Zn(2+): His-110, His-113, Asp-120, Asp-147, and His-211. The tract at residues 227–262 (DTPPPGDGCGAELESWFQPPPPSAKPGKTLPPPLPP) is disordered. Residues 244 to 262 (QPPPPSAKPGKTLPPPLPP) show a composition bias toward pro residues.

The protein belongs to the peptidase M74 family. Dimer. Zn(2+) is required as a cofactor.

It localises to the periplasm. Its function is as follows. Murein endopeptidase that cleaves the D-alanyl-meso-2,6-diamino-pimelyl amide bond that connects peptidoglycan strands. Likely plays a role in the removal of murein from the sacculus. The protein is Penicillin-insensitive murein endopeptidase of Yersinia pestis bv. Antiqua (strain Antiqua).